Consider the following 303-residue polypeptide: Probable cell division protein WhiA (303 aa).

A DNA-binding region (H-T-H motif) is located at residues 272-303 (SIQQLADSLSTPLTKSGVNHRLRKINKIADEL).

It belongs to the WhiA family.

Involved in cell division and chromosome segregation. This chain is Probable cell division protein WhiA, found in Streptococcus pneumoniae serotype 4 (strain ATCC BAA-334 / TIGR4).